The following is a 20-amino-acid chain: FLNPFRWMINKYREWKNKKN.

Expressed by the venom gland.

The protein resides in the secreted. The chain is Cupiennin-6f from Cupiennius salei (American wandering spider).